The primary structure comprises 157 residues: SsrA-binding protein (157 aa).

A compositionally biased stretch (basic and acidic residues) spans 136-151 (KRETSAKRDWSREKQR). The segment at 136–157 (KRETSAKRDWSREKQRLLKQNS) is disordered.

This sequence belongs to the SmpB family.

Its subcellular location is the cytoplasm. Its function is as follows. Required for rescue of stalled ribosomes mediated by trans-translation. Binds to transfer-messenger RNA (tmRNA), required for stable association of tmRNA with ribosomes. tmRNA and SmpB together mimic tRNA shape, replacing the anticodon stem-loop with SmpB. tmRNA is encoded by the ssrA gene; the 2 termini fold to resemble tRNA(Ala) and it encodes a 'tag peptide', a short internal open reading frame. During trans-translation Ala-aminoacylated tmRNA acts like a tRNA, entering the A-site of stalled ribosomes, displacing the stalled mRNA. The ribosome then switches to translate the ORF on the tmRNA; the nascent peptide is terminated with the 'tag peptide' encoded by the tmRNA and targeted for degradation. The ribosome is freed to recommence translation, which seems to be the essential function of trans-translation. This is SsrA-binding protein from Cereibacter sphaeroides (strain ATCC 17029 / ATH 2.4.9) (Rhodobacter sphaeroides).